The primary structure comprises 226 residues: Uridylate kinase (226 aa).

6-10 provides a ligand contact to ATP; sequence KISGK. Residue glycine 43 coordinates UMP. 2 residues coordinate ATP: glycine 44 and arginine 48. UMP-binding positions include aspartate 65 and 113–119; that span reads FQPGQST. 4 residues coordinate ATP: threonine 139, asparagine 140, tyrosine 145, and aspartate 148.

It belongs to the UMP kinase family. In terms of assembly, homohexamer.

The protein resides in the cytoplasm. The catalysed reaction is UMP + ATP = UDP + ADP. Its pathway is pyrimidine metabolism; CTP biosynthesis via de novo pathway; UDP from UMP (UMPK route): step 1/1. With respect to regulation, inhibited by UTP. In terms of biological role, catalyzes the reversible phosphorylation of UMP to UDP. This Saccharolobus islandicus (strain M.16.27) (Sulfolobus islandicus) protein is Uridylate kinase.